The chain runs to 89 residues: Small ribosomal subunit protein uS19 (89 aa).

It belongs to the universal ribosomal protein uS19 family.

Functionally, protein S19 forms a complex with S13 that binds strongly to the 16S ribosomal RNA. The polypeptide is Small ribosomal subunit protein uS19 (Xanthomonas axonopodis pv. citri (strain 306)).